An 853-amino-acid chain; its full sequence is E3 ubiquitin-protein ligase ZNRF3 (853 aa).

The first 28 residues, 1-28 (MKEPRIRGGLPLVWLWVLLAVAPGESLA), serve as a signal peptide directing secretion. The Extracellular portion of the chain corresponds to 29–192 (KETAFVEVVL…PRQPTEYFDM (164 aa)). A helical transmembrane segment spans residues 193 to 213 (GIFLAFFVVVSLVCLILLIKI). The Cytoplasmic segment spans residues 214–853 (KLKQRRSQNS…GQDCHPTDRD (640 aa)). Residues 266 to 307 (CAICLEKYIDGEELRVIPCTHRFHKRCVDPWLLQNHTCPHCR) form an RING-type; atypical zinc finger. Disordered regions lie at residues 583–629 (SRSP…RLSS), 650–673 (SSGTVPDASVSISQGGGKDRRGPE), 685–713 (GDPSSDCTNLYLGPDPHQTSGPSSSGGLY), and 834–853 (TGKEGAGSTTGQDCHPTDRD). Gly residues predominate over residues 589-607 (TGGGDAPGCGGEGGTGSGR). Positions 615–629 (HQTFPNSPSRDRLSS) are enriched in polar residues.

This sequence belongs to the ZNRF3 family.

It is found in the cell membrane. The enzyme catalyses S-ubiquitinyl-[E2 ubiquitin-conjugating enzyme]-L-cysteine + [acceptor protein]-L-lysine = [E2 ubiquitin-conjugating enzyme]-L-cysteine + N(6)-ubiquitinyl-[acceptor protein]-L-lysine.. It participates in protein modification; protein ubiquitination. In terms of biological role, E3 ubiquitin-protein ligase that acts as a negative regulator of the Wnt signaling pathway by mediating the ubiquitination and subsequent degradation of Wnt receptor complex components. Along with RSPO2 and RNF43, constitutes a master switch that governs limb specification. The sequence is that of E3 ubiquitin-protein ligase ZNRF3 (znrf3) from Xenopus tropicalis (Western clawed frog).